Here is a 298-residue protein sequence, read N- to C-terminus: Probable endonuclease 4 (298 aa).

The Zn(2+) site is built by His-70, His-111, Glu-146, Asp-180, His-183, His-215, Asp-228, His-230, and Glu-260.

Belongs to the AP endonuclease 2 family. It depends on Zn(2+) as a cofactor.

It catalyses the reaction Endonucleolytic cleavage to 5'-phosphooligonucleotide end-products.. Functionally, endonuclease IV plays a role in DNA repair. It cleaves phosphodiester bonds at apurinic or apyrimidinic (AP) sites, generating a 3'-hydroxyl group and a 5'-terminal sugar phosphate. The protein is Probable endonuclease 4 of Halalkalibacterium halodurans (strain ATCC BAA-125 / DSM 18197 / FERM 7344 / JCM 9153 / C-125) (Bacillus halodurans).